The primary structure comprises 492 residues: MKRSALILSFLPLVFGCDNPKSPGHSCASVYSVSSAAASSFCATFTASTVTATTGVPEALLSNCDYKTKHLSSACSCLGTAAVPTVATPSSVSSVYITSATATPTSFTFKTSTAHIVKVAKAATSSTAVVTTPVSVPTASSSFTGNGGTTCTVTEYAAISSAVASCSNILLSDIYAPPSSTIDLQGLQTGAAVIFAGKTTFGDTADSDFDPIVVSGTSVTITGVEGHVIDGNGAAYWDGQGSNGGSDKPDHFFVVKDMYNSRIENLYIQNWPVHCFEIESTEHLTVSGLTLNNSAGDAANSKSDGDPAAHNSDGFDIKESSYFTLENTWVHNQDDCVAVTSGTDIVVDGMYCYGGHGLSIGSIGGKSDNTVNGVTFSNSQVISSQNGCRIKTNSGETGEVYNIRYENITLSDISDYGIDVQQDYLNGGPTGEPTNGVTIANVTFVDVTGTMSDGKDYYILCGDDSCSNFVFDGVSITGGSGDNCNYPSTGCP.

Residues 1 to 16 (MKRSALILSFLPLVFG) form the signal peptide. Cys151 and Cys166 are oxidised to a cystine. 4 PbH1 repeats span residues 216–238 (GTSV…AYWD), 258–280 (MYNS…EIES), 281–319 (TEHL…DIKE), and 320–341 (SSYF…AVTS). Asn292 carries an N-linked (GlcNAc...) asparagine glycan. The Proton donor role is filled by Asp334. Cys336 and Cys352 are oxidised to a cystine. The active site involves His356. 3 PbH1 repeats span residues 371–392 (VNGV…RIKT), 400–422 (VYNI…DVQQ), and 434–478 (TNGV…SITG). N-linked (GlcNAc...) asparagine glycosylation is found at Asn407 and Asn441. 2 disulfide bridges follow: Cys461–Cys466 and Cys484–Cys491.

It belongs to the glycosyl hydrolase 28 family.

The protein localises to the secreted. It carries out the reaction (1,4-alpha-D-galacturonosyl)n+m + H2O = (1,4-alpha-D-galacturonosyl)n + (1,4-alpha-D-galacturonosyl)m.. In terms of biological role, involved in maceration and soft-rotting of plant tissue. Hydrolyzes the 1,4-alpha glycosidic bonds of de-esterified pectate in the smooth region of the plant cell wall. In Aspergillus flavus (strain ATCC 200026 / FGSC A1120 / IAM 13836 / NRRL 3357 / JCM 12722 / SRRC 167), this protein is Probable endopolygalacturonase D (pgaD).